We begin with the raw amino-acid sequence, 400 residues long: MSESVRTNTSIWSKGMLSVIVAQFLSAFGDNALLFATLALLKAQFYPDWSQPVLQMVFVGAYILFAPFVGQIADSFAKGRVMMVANGLKLAGAAGICLGINPFVGYTLVGIGAAAYSPAKYGILGELTTGDKLVKANGLMEASTIAAILLGSVAGGVLADWHVIAALVACALAYAGAVAANLFIPKLVAARPGQSWRLSAMTRSFFSACVVLWRNGETRFSLVGTGLFWGAGVTLRFLLVLWVPVALGITDNATPTYLNAMVAVGIVVGAGAAAKLVTLETVSRCMPAGILIGVVVAIFSLQHALLPAYALLLLIGMLGGFFVVPLNALLQERGKKSVGAGNAIAVQNLGENSAMLLMLGLYSLAVLVGVPAVAIGIGFGVLFALAIAALWIWQRRQASY.

Helical transmembrane passes span 19–39 (VIVAQFLSAFGDNALLFATLA), 53–73 (VLQMVFVGAYILFAPFVGQIA), 91–111 (AGAAGICLGINPFVGYTLVGI), 139–159 (LMEASTIAAILLGSVAGGVLA), 164–184 (IAALVACALAYAGAVAANLFI), 195–213 (SWRLSAMTRSFFSACVVLW), 227–247 (LFWGAGVTLRFLLVLWVPVAL), 257–277 (YLNAMVAVGIVVGAGAAAKLV), 281–301 (TVSRCMPAGILIGVVVAIFSL), 304–324 (ALLPAYALLLLIGMLGGFFVV), 352–372 (NSAMLLMLGLYSLAVLVGVPA), and 373–393 (VAIGIGFGVLFALAIAALWIW).

Belongs to the major facilitator superfamily. LplT (TC 2.A.1.42) family.

It localises to the cell inner membrane. Catalyzes the facilitated diffusion of 2-acyl-glycero-3-phosphoethanolamine (2-acyl-GPE) into the cell. The polypeptide is Lysophospholipid transporter LplT (Salmonella newport (strain SL254)).